We begin with the raw amino-acid sequence, 101 residues long: Small integral membrane protein 21 (101 aa).

A helical transmembrane segment spans residues 49–65; the sequence is HIRFFTLLVLFHVMVLL.

The protein localises to the membrane. The sequence is that of Small integral membrane protein 21 (SMIM21) from Homo sapiens (Human).